An 89-amino-acid chain; its full sequence is Small ribosomal subunit protein uS15 (89 aa).

Positions 1-21 are enriched in basic and acidic residues; the sequence is MVLDPTQKKSVIDAHAKHEGD. The segment at 1 to 24 is disordered; sequence MVLDPTQKKSVIDAHAKHEGDTGS.

It belongs to the universal ribosomal protein uS15 family. As to quaternary structure, part of the 30S ribosomal subunit. Forms a bridge to the 50S subunit in the 70S ribosome, contacting the 23S rRNA.

In terms of biological role, one of the primary rRNA binding proteins, it binds directly to 16S rRNA where it helps nucleate assembly of the platform of the 30S subunit by binding and bridging several RNA helices of the 16S rRNA. Its function is as follows. Forms an intersubunit bridge (bridge B4) with the 23S rRNA of the 50S subunit in the ribosome. This chain is Small ribosomal subunit protein uS15, found in Desulfovibrio desulfuricans (strain ATCC 27774 / DSM 6949 / MB).